A 208-amino-acid polypeptide reads, in one-letter code: Thiamine-phosphate synthase (208 aa).

4-amino-2-methyl-5-(diphosphooxymethyl)pyrimidine contacts are provided by residues Gln38–Lys42 and Asn70. 2 residues coordinate Mg(2+): Asp71 and Asp90. Position 109 (Thr109) interacts with 4-amino-2-methyl-5-(diphosphooxymethyl)pyrimidine. Ser136–Thr138 is a binding site for 2-[(2R,5Z)-2-carboxy-4-methylthiazol-5(2H)-ylidene]ethyl phosphate. A 4-amino-2-methyl-5-(diphosphooxymethyl)pyrimidine-binding site is contributed by Lys139. Residues Gly166 and Val186–Ser187 each bind 2-[(2R,5Z)-2-carboxy-4-methylthiazol-5(2H)-ylidene]ethyl phosphate.

Belongs to the thiamine-phosphate synthase family. It depends on Mg(2+) as a cofactor.

The enzyme catalyses 2-[(2R,5Z)-2-carboxy-4-methylthiazol-5(2H)-ylidene]ethyl phosphate + 4-amino-2-methyl-5-(diphosphooxymethyl)pyrimidine + 2 H(+) = thiamine phosphate + CO2 + diphosphate. The catalysed reaction is 2-(2-carboxy-4-methylthiazol-5-yl)ethyl phosphate + 4-amino-2-methyl-5-(diphosphooxymethyl)pyrimidine + 2 H(+) = thiamine phosphate + CO2 + diphosphate. It catalyses the reaction 4-methyl-5-(2-phosphooxyethyl)-thiazole + 4-amino-2-methyl-5-(diphosphooxymethyl)pyrimidine + H(+) = thiamine phosphate + diphosphate. It participates in cofactor biosynthesis; thiamine diphosphate biosynthesis; thiamine phosphate from 4-amino-2-methyl-5-diphosphomethylpyrimidine and 4-methyl-5-(2-phosphoethyl)-thiazole: step 1/1. Condenses 4-methyl-5-(beta-hydroxyethyl)thiazole monophosphate (THZ-P) and 2-methyl-4-amino-5-hydroxymethyl pyrimidine pyrophosphate (HMP-PP) to form thiamine monophosphate (TMP). This is Thiamine-phosphate synthase from Aromatoleum aromaticum (strain DSM 19018 / LMG 30748 / EbN1) (Azoarcus sp. (strain EbN1)).